The sequence spans 290 residues: Probable ECF RNA polymerase sigma factor SigI (290 aa).

The interval 11 to 74 (WRAHRAYLVD…LCLDHIKSAS (64 aa)) is sigma-70 factor domain-2. The Polymerase core binding signature appears at 34 to 37 (DMVQ). The sigma-70 factor domain-4_2 stretch occupies residues 110 to 162 (LALLIMLERLGPAERVVFVLHEIFGLPYQQIATTIGSQASTCRQLAHRARRKI). Positions 137–156 (YQQIATTIGSQASTCRQLAH) form a DNA-binding region, H-T-H motif.

The protein belongs to the sigma-70 factor family. ECF subfamily. As to quaternary structure, interacts transiently with the RNA polymerase catalytic core formed by RpoA, RpoB, RpoC and RpoZ (2 alpha, 1 beta, 1 beta' and 1 omega subunit) to form the RNA polymerase holoenzyme that can initiate transcription.

Sigma factors are initiation factors that promote the attachment of RNA polymerase to specific initiation sites and are then released. Extracytoplasmic function (ECF) sigma factors are held in an inactive form by a cognate anti-sigma factor until released, although no anti-sigma factor is known for this protein. In Mycobacterium tuberculosis (strain CDC 1551 / Oshkosh), this protein is Probable ECF RNA polymerase sigma factor SigI (sigI).